Consider the following 634-residue polypeptide: Chaperone protein HtpG (634 aa).

The a; substrate-binding stretch occupies residues 1-339 (MAQETMSFQA…SADLPLNVSR (339 aa)). Residues 340 to 559 (EILQESRDVK…DGEMSGYLQR (220 aa)) are b. The tract at residues 560–634 (MLKAAGQQAP…ALLLARANEA (75 aa)) is c.

The protein belongs to the heat shock protein 90 family. As to quaternary structure, homodimer.

Its subcellular location is the cytoplasm. Molecular chaperone. Has ATPase activity. The polypeptide is Chaperone protein HtpG (Paraburkholderia xenovorans (strain LB400)).